The following is a 99-amino-acid chain: Small ribosomal subunit protein eS24 (99 aa).

Belongs to the eukaryotic ribosomal protein eS24 family.

This Methanothrix thermoacetophila (strain DSM 6194 / JCM 14653 / NBRC 101360 / PT) (Methanosaeta thermophila) protein is Small ribosomal subunit protein eS24.